The chain runs to 143 residues: Ribosome maturation factor RimP (143 aa).

This sequence belongs to the RimP family.

Its subcellular location is the cytoplasm. Required for maturation of 30S ribosomal subunits. This is Ribosome maturation factor RimP from Neisseria gonorrhoeae (strain ATCC 700825 / FA 1090).